The sequence spans 146 residues: Cytidine deaminase (146 aa).

A CMP/dCMP-type deaminase domain is found at 13–140; it reads EHVQRLLLSS…ELLPASFGPE (128 aa). Substrate is bound at residue 54 to 56; the sequence is NIE. Zn(2+) is bound at residue Cys65. The Proton donor role is filled by Glu67. Zn(2+) contacts are provided by Cys99 and Cys102.

The protein belongs to the cytidine and deoxycytidylate deaminase family. As to quaternary structure, homotetramer. It depends on Zn(2+) as a cofactor.

The catalysed reaction is cytidine + H2O + H(+) = uridine + NH4(+). The enzyme catalyses 2'-deoxycytidine + H2O + H(+) = 2'-deoxyuridine + NH4(+). This enzyme scavenges exogenous and endogenous cytidine and 2'-deoxycytidine for UMP synthesis. The polypeptide is Cytidine deaminase (Cda) (Mus musculus (Mouse)).